The sequence spans 182 residues: Bifunctional protein PyrR (182 aa).

A PRPP-binding motif is present at residues 99–111 (VILVDDVLYTGRT).

The protein belongs to the purine/pyrimidine phosphoribosyltransferase family. PyrR subfamily. In terms of assembly, homodimer and homohexamer; in equilibrium.

It carries out the reaction UMP + diphosphate = 5-phospho-alpha-D-ribose 1-diphosphate + uracil. Its function is as follows. Regulates transcriptional attenuation of the pyrimidine nucleotide (pyr) operon by binding in a uridine-dependent manner to specific sites on pyr mRNA. This disrupts an antiterminator hairpin in the RNA and favors formation of a downstream transcription terminator, leading to a reduced expression of downstream genes. Also displays a weak uracil phosphoribosyltransferase activity which is not physiologically significant. The protein is Bifunctional protein PyrR of Alkaliphilus metalliredigens (strain QYMF).